The sequence spans 690 residues: DNA ligase (690 aa).

NAD(+) is bound by residues 43 to 47 (DAEYD), 92 to 93 (SI), and glutamate 129. Catalysis depends on lysine 131, which acts as the N6-AMP-lysine intermediate. 4 residues coordinate NAD(+): arginine 152, glutamate 188, lysine 309, and lysine 333. Zn(2+) contacts are provided by cysteine 427, cysteine 430, cysteine 445, and cysteine 451. In terms of domain architecture, BRCT spans 610–690 (VTPTPLSGKT…GLKELLDGHS (81 aa)).

Belongs to the NAD-dependent DNA ligase family. LigA subfamily. Mg(2+) is required as a cofactor. Requires Mn(2+) as cofactor.

The enzyme catalyses NAD(+) + (deoxyribonucleotide)n-3'-hydroxyl + 5'-phospho-(deoxyribonucleotide)m = (deoxyribonucleotide)n+m + AMP + beta-nicotinamide D-nucleotide.. In terms of biological role, DNA ligase that catalyzes the formation of phosphodiester linkages between 5'-phosphoryl and 3'-hydroxyl groups in double-stranded DNA using NAD as a coenzyme and as the energy source for the reaction. It is essential for DNA replication and repair of damaged DNA. This chain is DNA ligase, found in Albidiferax ferrireducens (strain ATCC BAA-621 / DSM 15236 / T118) (Rhodoferax ferrireducens).